A 110-amino-acid polypeptide reads, in one-letter code: Large ribosomal subunit protein uL22 (110 aa).

The protein belongs to the universal ribosomal protein uL22 family. In terms of assembly, part of the 50S ribosomal subunit.

Its function is as follows. This protein binds specifically to 23S rRNA; its binding is stimulated by other ribosomal proteins, e.g. L4, L17, and L20. It is important during the early stages of 50S assembly. It makes multiple contacts with different domains of the 23S rRNA in the assembled 50S subunit and ribosome. In terms of biological role, the globular domain of the protein is located near the polypeptide exit tunnel on the outside of the subunit, while an extended beta-hairpin is found that lines the wall of the exit tunnel in the center of the 70S ribosome. This chain is Large ribosomal subunit protein uL22, found in Yersinia enterocolitica serotype O:8 / biotype 1B (strain NCTC 13174 / 8081).